The sequence spans 217 residues: Uracil phosphoribosyltransferase (217 aa).

5-phospho-alpha-D-ribose 1-diphosphate-binding positions include Arg84, Arg109, and 137-145 (DPMLATGGS). Uracil contacts are provided by residues Ile202 and 207-209 (GDA). Asp208 provides a ligand contact to 5-phospho-alpha-D-ribose 1-diphosphate.

This sequence belongs to the UPRTase family. Mg(2+) serves as cofactor.

The enzyme catalyses UMP + diphosphate = 5-phospho-alpha-D-ribose 1-diphosphate + uracil. It functions in the pathway pyrimidine metabolism; UMP biosynthesis via salvage pathway; UMP from uracil: step 1/1. Allosterically activated by GTP. Functionally, catalyzes the conversion of uracil and 5-phospho-alpha-D-ribose 1-diphosphate (PRPP) to UMP and diphosphate. The polypeptide is Uracil phosphoribosyltransferase (Synechococcus elongatus (strain ATCC 33912 / PCC 7942 / FACHB-805) (Anacystis nidulans R2)).